A 157-amino-acid polypeptide reads, in one-letter code: MAEKGQKSLAVNKKARFDYLIEDTFEAGMVLVGTEVKSIRQGKINIKEGYARIENSEIYLHNVHISPYEQGNIFNKDPLRIRKLLLHKAEIRKLIGYVQQKGYTLVPMKVYLQNGLVKLQLGVGVGKKLHDKRQDMAKKDSQRRIQKELGQRQKGME.

A disordered region spans residues 130–157 (HDKRQDMAKKDSQRRIQKELGQRQKGME). A compositionally biased stretch (basic and acidic residues) spans 132-157 (KRQDMAKKDSQRRIQKELGQRQKGME).

It belongs to the SmpB family.

It is found in the cytoplasm. In terms of biological role, required for rescue of stalled ribosomes mediated by trans-translation. Binds to transfer-messenger RNA (tmRNA), required for stable association of tmRNA with ribosomes. tmRNA and SmpB together mimic tRNA shape, replacing the anticodon stem-loop with SmpB. tmRNA is encoded by the ssrA gene; the 2 termini fold to resemble tRNA(Ala) and it encodes a 'tag peptide', a short internal open reading frame. During trans-translation Ala-aminoacylated tmRNA acts like a tRNA, entering the A-site of stalled ribosomes, displacing the stalled mRNA. The ribosome then switches to translate the ORF on the tmRNA; the nascent peptide is terminated with the 'tag peptide' encoded by the tmRNA and targeted for degradation. The ribosome is freed to recommence translation, which seems to be the essential function of trans-translation. The sequence is that of SsrA-binding protein from Alkaliphilus metalliredigens (strain QYMF).